Here is an 855-residue protein sequence, read N- to C-terminus: DNA mismatch repair protein MutS (855 aa).

621–628 is a binding site for ATP; that stretch reads GPNMGGKS.

It belongs to the DNA mismatch repair MutS family.

Its function is as follows. This protein is involved in the repair of mismatches in DNA. It is possible that it carries out the mismatch recognition step. This protein has a weak ATPase activity. This chain is DNA mismatch repair protein MutS, found in Francisella tularensis subsp. holarctica (strain OSU18).